The following is a 455-amino-acid chain: UPF0053 protein MT1890 (455 aa).

One can recognise a CNNM transmembrane domain in the interval 2–205; that stretch reads NLTDTVATIL…ARSGALDDAT (204 aa). The next 4 membrane-spanning stretches (helical) occupy residues 6-26, 68-88, 106-126, and 148-168; these read TVAT…FVAA, LGIS…VAEL, LITF…GELV, and LFSL…NWIV. CBS domains follow at residues 224 to 285 and 286 to 346; these read MTPR…AHTL and LTTV…VRDE.

The protein belongs to the UPF0053 family.

Its subcellular location is the cell membrane. The chain is UPF0053 protein MT1890 from Mycobacterium tuberculosis (strain CDC 1551 / Oshkosh).